The sequence spans 83 residues: Cytochrome b559 subunit alpha (83 aa).

The helical transmembrane segment at 22-36 (VIHAVTLPAIFLAGF) threads the bilayer. His24 is a heme binding site.

It belongs to the PsbE/PsbF family. Heterodimer of an alpha subunit and a beta subunit. PSII is composed of 1 copy each of membrane proteins PsbA, PsbB, PsbC, PsbD, PsbE, PsbF, PsbH, PsbI, PsbJ, PsbK, PsbL, PsbM, PsbT, PsbX, PsbY, PsbZ, Psb30/Ycf12, peripheral proteins PsbO, CyanoQ (PsbQ), PsbU, PsbV and a large number of cofactors. It forms dimeric complexes. Requires heme b as cofactor.

The protein resides in the cellular thylakoid membrane. In terms of biological role, this b-type cytochrome is tightly associated with the reaction center of photosystem II (PSII). PSII is a light-driven water:plastoquinone oxidoreductase that uses light energy to abstract electrons from H(2)O, generating O(2) and a proton gradient subsequently used for ATP formation. It consists of a core antenna complex that captures photons, and an electron transfer chain that converts photonic excitation into a charge separation. This Synechococcus sp. (strain RCC307) protein is Cytochrome b559 subunit alpha.